A 116-amino-acid polypeptide reads, in one-letter code: Probable transcriptional regulator WhiB6 (116 aa).

[4Fe-4S] cluster is bound by residues Cys12, Cys53, Cys56, and Cys62. The 54-residue stretch at 33 to 86 folds into the 4Fe-4S Wbl-type domain; it reads VCTQDPDRWTTTPDDEAKTLCRACPRRWLCARDAVESAGAEGLWAGVVIPESGR.

It belongs to the WhiB family. [4Fe-4S] cluster is required as a cofactor. Post-translationally, the Fe-S cluster can be nitrosylated by nitric oxide (NO). In terms of processing, upon Fe-S cluster removal intramolecular disulfide bonds are formed.

The protein resides in the cytoplasm. Functionally, acts as a transcriptional regulator. Probably redox-responsive. The apo- but not holo-form probably binds DNA. The protein is Probable transcriptional regulator WhiB6 (whiB6) of Mycobacterium tuberculosis (strain CDC 1551 / Oshkosh).